Here is a 395-residue protein sequence, read N- to C-terminus: Tyrosine--tRNA ligase (395 aa).

Residues 42-51 carry the 'HIGH' region motif; sequence PTAPDIHLGH. The short motif at 226 to 230 is the 'KMSKS' region element; sequence KMSKS. Position 229 (lysine 229) interacts with ATP. An S4 RNA-binding domain is found at 334 to 394; the sequence is IAISNLLKDA…GKRKFARITL (61 aa).

It belongs to the class-I aminoacyl-tRNA synthetase family. TyrS type 2 subfamily. Homodimer.

It is found in the cytoplasm. The enzyme catalyses tRNA(Tyr) + L-tyrosine + ATP = L-tyrosyl-tRNA(Tyr) + AMP + diphosphate + H(+). In terms of biological role, catalyzes the attachment of tyrosine to tRNA(Tyr) in a two-step reaction: tyrosine is first activated by ATP to form Tyr-AMP and then transferred to the acceptor end of tRNA(Tyr). In Photobacterium profundum (strain SS9), this protein is Tyrosine--tRNA ligase.